The following is a 535-amino-acid chain: uncharacterized protein (535 aa).

2 helical membrane-spanning segments follow: residues 7 to 27 (DFDV…AYLA) and 509 to 529 (GGAV…ACLA).

It localises to the cell membrane. This is an uncharacterized protein from Mycobacterium bovis (strain ATCC BAA-935 / AF2122/97).